A 550-amino-acid polypeptide reads, in one-letter code: Hydroxylamine reductase (550 aa).

[2Fe-2S] cluster is bound by residues cysteine 3, cysteine 6, cysteine 18, and cysteine 25. Positions 249, 273, 317, 405, 433, 458, 492, and 494 each coordinate hybrid [4Fe-2O-2S] cluster. Cysteine 405 bears the Cysteine persulfide mark.

This sequence belongs to the HCP family. The cofactor is [2Fe-2S] cluster. Hybrid [4Fe-2O-2S] cluster is required as a cofactor.

The protein localises to the cytoplasm. It carries out the reaction A + NH4(+) + H2O = hydroxylamine + AH2 + H(+). In terms of biological role, catalyzes the reduction of hydroxylamine to form NH(3) and H(2)O. This chain is Hydroxylamine reductase, found in Salmonella typhi.